A 280-amino-acid chain; its full sequence is Tryptophan 2,3-dioxygenase (280 aa).

Substrate contacts are provided by residues 49–53 (FIIIH), tyrosine 111, and arginine 115. A heme-binding site is contributed by histidine 238. Position 252 (threonine 252) interacts with substrate.

This sequence belongs to the tryptophan 2,3-dioxygenase family. In terms of assembly, homotetramer. Heme is required as a cofactor.

It carries out the reaction L-tryptophan + O2 = N-formyl-L-kynurenine. It functions in the pathway amino-acid degradation; L-tryptophan degradation via kynurenine pathway; L-kynurenine from L-tryptophan: step 1/2. Heme-dependent dioxygenase that catalyzes the oxidative cleavage of the L-tryptophan (L-Trp) pyrrole ring and converts L-tryptophan to N-formyl-L-kynurenine. Catalyzes the oxidative cleavage of the indole moiety. In Geobacillus thermodenitrificans (strain NG80-2), this protein is Tryptophan 2,3-dioxygenase.